The sequence spans 33 residues: Beta-theraphotoxin-Cm1a (33 aa).

Cystine bridges form between C2–C17, C9–C22, and C16–C29. L33 carries the leucine amide modification.

It belongs to the neurotoxin 10 (Hwtx-1) family. 04 (CcoTx1) subfamily. As to expression, expressed by the venom gland.

It is found in the secreted. In terms of biological role, inhibits many voltage-gated sodium channels and one voltage-gated calcium channel (Cav2.2/CACNA1B (IC(50)=400 nM), Nav1.2/SCN2A (IC(50)=3-70 nM), Nav1.1/SCN1A (IC(50)=523-1060 nM), Nav1.7/SCN9A (IC(50)=129.1-5120 nM), Nav1.4/SCN4A (IC(50)=263-888 nM or &gt;10 uM) and Nav1.5/SCN5A (IC(50)=188-323 nM or &gt;10 uM)). It acts by shifting the voltage dependence of channel activation to more depolarized potentials and by blocking the inward component of the sodium current. It shows moderate affinity for lipid bilayers. On Nav1.7/SCN9A, it has been shown to interact with the S3-S4 loop of domain DII (site 4). Is significantly more potent against Nav1.2/SCN2A than the other Nav channel subtypes. In vivo, this toxin causes general ataxia, lack of response to stimuli, and semiparalysis. After a few minutes, the mice are unable to stand, and breathing is reduced in rhythm and intensity. Symptoms gradually increase with progressive slowing of breathing and flaccid paralysis, death occurred within 10 to 20 minutes post injection. Animals remain totally flaccid, and no symptoms of excitatory neurotoxicity are observed. In Ceratogyrus marshalli (Straighthorned baboon tarantula), this protein is Beta-theraphotoxin-Cm1a.